Here is a 778-residue protein sequence, read N- to C-terminus: uncharacterized protein (778 aa).

Polar residues-rich tracts occupy residues 1–11 (MPISSPGTRCS), 18–34 (TLQQ…QSLG), and 41–51 (GSITENYVQDS). The interval 1-60 (MPISSPGTRCSSDLKDPTLQQYSAESVSTEQSLGTFEESKGSITENYVQDSSVDEHDDGN) is disordered. The next 2 helical transmembrane spans lie at 356-381 (YILM…APII) and 401-423 (GFLA…GAHI).

Belongs to the TMCO4 family.

The protein resides in the golgi apparatus membrane. This is an uncharacterized protein from Schizosaccharomyces pombe (strain 972 / ATCC 24843) (Fission yeast).